Consider the following 414-residue polypeptide: Na(+)-translocating NADH-quinone reductase subunit B (414 aa).

The next 4 membrane-spanning stretches (helical) occupy residues 23-40 (WFAL…PGLV), 56-76 (IMIM…YNAG), 129-149 (FLPI…LFCM), and 164-184 (ILFA…LGIT). At Thr-236 the chain carries FMN phosphoryl threonine. 5 helical membrane passes run 268–288 (IPGS…AMIV), 297–317 (IIAG…VIGS), 322–342 (MFSM…GMFF), 358–378 (WWYG…NPAY), and 381–401 (GMML…HLVV).

The protein belongs to the NqrB/RnfD family. Composed of six subunits; NqrA, NqrB, NqrC, NqrD, NqrE and NqrF. FMN is required as a cofactor.

The protein localises to the cell inner membrane. The catalysed reaction is a ubiquinone + n Na(+)(in) + NADH + H(+) = a ubiquinol + n Na(+)(out) + NAD(+). Functionally, NQR complex catalyzes the reduction of ubiquinone-1 to ubiquinol by two successive reactions, coupled with the transport of Na(+) ions from the cytoplasm to the periplasm. NqrA to NqrE are probably involved in the second step, the conversion of ubisemiquinone to ubiquinol. This Vibrio vulnificus (strain CMCP6) protein is Na(+)-translocating NADH-quinone reductase subunit B.